The following is a 278-amino-acid chain: Diaminopimelate epimerase (278 aa).

Substrate is bound by residues Asn-13 and Asn-66. Cys-75 functions as the Proton donor in the catalytic mechanism. Residues 76 to 77 (GN), Asn-162, Asn-195, and 213 to 214 (ER) contribute to the substrate site. Cys-222 acts as the Proton acceptor in catalysis. Residue 223 to 224 (GT) coordinates substrate.

It belongs to the diaminopimelate epimerase family. Homodimer.

The protein resides in the cytoplasm. It carries out the reaction (2S,6S)-2,6-diaminopimelate = meso-2,6-diaminopimelate. It functions in the pathway amino-acid biosynthesis; L-lysine biosynthesis via DAP pathway; DL-2,6-diaminopimelate from LL-2,6-diaminopimelate: step 1/1. Its function is as follows. Catalyzes the stereoinversion of LL-2,6-diaminopimelate (L,L-DAP) to meso-diaminopimelate (meso-DAP), a precursor of L-lysine and an essential component of the bacterial peptidoglycan. The chain is Diaminopimelate epimerase from Trichodesmium erythraeum (strain IMS101).